The sequence spans 222 residues: Vesicle transport v-SNARE 12 (222 aa).

Position 2 is an N-acetylserine (S2). At 2-199 (SDVFEGYERQ…MSRRMTRNKW (198 aa)) the chain is on the cytoplasmic side. Residues 68–95 (KAVCLSKLREYKSDLNQLKKEFKRVSSA) are a coiled coil. Residues 200–220 (IITSVIVALVLAIILIISYKL) traverse the membrane as a helical; Anchor for type IV membrane protein segment. Residues 221–222 (SH) are Vesicular-facing.

This sequence belongs to the VTI1 family. As to quaternary structure, forms SNARE complexes with the t-SNAREs SYP61 and either SYP41 or SYP42, and with a much lower affinity with SYP51 in the TGN. Also interacts with VPS45, a Sec1 protein, but not with SYP21 or SYP22. Binds to EPSIN2. Core constituent of the SNARE complex required for membrane fusion at the trans-Golgi network. Interacts with SCYL2B. As to expression, expressed in roots, stems, flowers and leaves.

Its subcellular location is the golgi apparatus. The protein localises to the trans-Golgi network membrane. The protein resides in the prevacuolar compartment membrane. It is found in the cell membrane. Together with either SYP41 or SYP61, required for membrane fusion; the fusion of phospholipid vesicles containing SYP41 or SYP61 and VTI12 is triggered by YKT61 and YKT62. Functions as a v-SNARE responsible for the docking or fusion of transport vesicles within the trans-Golgi network (TGN) and mediates liposome fusion. Necessary to deliver proteins to the protein storage vacuole (PSV). May be also involved in retrograde traffic to the cis-Golgi. In Arabidopsis thaliana (Mouse-ear cress), this protein is Vesicle transport v-SNARE 12.